The chain runs to 156 residues: Ribosomal RNA large subunit methyltransferase H (156 aa).

Residues Leu73, Gly104, and 123 to 128 each bind S-adenosyl-L-methionine; that span reads LSPLTL.

Belongs to the RNA methyltransferase RlmH family. As to quaternary structure, homodimer.

It is found in the cytoplasm. It catalyses the reaction pseudouridine(1915) in 23S rRNA + S-adenosyl-L-methionine = N(3)-methylpseudouridine(1915) in 23S rRNA + S-adenosyl-L-homocysteine + H(+). In terms of biological role, specifically methylates the pseudouridine at position 1915 (m3Psi1915) in 23S rRNA. The protein is Ribosomal RNA large subunit methyltransferase H of Pseudoalteromonas atlantica (strain T6c / ATCC BAA-1087).